We begin with the raw amino-acid sequence, 388 residues long: Alpha-2B adrenergic receptor (388 aa).

The chain crosses the membrane as a helical span at residues 1–25 (AIAAVITFLILFTIFGNALVILAVL). Residues 26–36 (TSRSLRAPQNL) are Cytoplasmic-facing. A helical membrane pass occupies residues 37–62 (FLVSLAAADILVATLIIPFSLANELL). Over 63-72 (GYWYFRRTWC) the chain is Extracellular. C72 and C151 are disulfide-bonded. A helical membrane pass occupies residues 73 to 95 (EVYLALDVLFCTSSIVHLCAISL). Topologically, residues 96–117 (DRYWAVSRALEYNSKRTPRXIK) are cytoplasmic. A helical membrane pass occupies residues 118–140 (CIILTVWLIAAAISLPPLIYKGD). Over 141–156 (QGPQPRGRPQCKLNQE) the chain is Extracellular. A helical membrane pass occupies residues 157–180 (AWYILSSSIGSFFAPCLIMILVYL). The Cytoplasmic segment spans residues 181–352 (RIYVIAKRSN…LTREKRFTFV (172 aa)). Positions 193–309 (GPRAKGASRE…ASACNPPLQQ (117 aa)) are disordered. Positions 239-249 (PTGEKEGKTPE) are enriched in basic and acidic residues. Residues 279–291 (PEEEAEEEEEECE) show a composition bias toward acidic residues. A compositionally biased stretch (low complexity) spans 292–302 (PQAAPASSASA). The chain crosses the membrane as a helical span at residues 353–376 (LAVVIGVFVLCWFPFFFSYSLGAI). Over 377–385 (CPQRCKVPH) the chain is Extracellular. The helical transmembrane segment at 386–388 (GLF) threads the bilayer.

The protein belongs to the G-protein coupled receptor 1 family. Adrenergic receptor subfamily. ADRA2B sub-subfamily. In terms of assembly, interacts with RAB26. Interacts with PPP1R9B.

Its subcellular location is the cell membrane. Its function is as follows. Alpha-2 adrenergic receptors mediate the catecholamine-induced inhibition of adenylate cyclase through the action of G proteins. The chain is Alpha-2B adrenergic receptor (ADRA2B) from Orycteropus afer (Aardvark).